Consider the following 757-residue polypeptide: Elongation factor G, mitochondrial (757 aa).

A mitochondrion-targeting transit peptide spans 1–41 (MLERAALLHRLRLPAHSLPFIYNGALFGGAKRSFSATSKRC). The tr-type G domain maps to 66–347 (KLLRNIGVSA…AIVDYLPEPS (282 aa)). GTP contacts are provided by residues 75-82 (AHIDSGKT), 146-150 (DTPGH), and 200-203 (NKMD).

This sequence belongs to the TRAFAC class translation factor GTPase superfamily. Classic translation factor GTPase family. EF-G/EF-2 subfamily.

It is found in the mitochondrion. Its pathway is protein biosynthesis; polypeptide chain elongation. Mitochondrial GTPase that catalyzes the GTP-dependent ribosomal translocation step during translation elongation. During this step, the ribosome changes from the pre-translocational (PRE) to the post-translocational (POST) state as the newly formed A-site-bound peptidyl-tRNA and P-site-bound deacylated tRNA move to the P and E sites, respectively. Catalyzes the coordinated movement of the two tRNA molecules, the mRNA and conformational changes in the ribosome. The chain is Elongation factor G, mitochondrial from Eremothecium gossypii (strain ATCC 10895 / CBS 109.51 / FGSC 9923 / NRRL Y-1056) (Yeast).